Consider the following 181-residue polypeptide: Protoporphyrinogen IX dehydrogenase [quinone] (181 aa).

A Flavodoxin-like domain is found at 3–172 (TLILFSTRDG…QVANFAREIA (170 aa)). FMN-binding positions include 9 to 13 (TRDGQ) and 84 to 152 (FYSV…ETDT).

This sequence belongs to the HemG family. It depends on FMN as a cofactor.

The protein localises to the cell inner membrane. It catalyses the reaction protoporphyrinogen IX + 3 a menaquinone = protoporphyrin IX + 3 a menaquinol. The enzyme catalyses protoporphyrinogen IX + 3 a ubiquinone = protoporphyrin IX + 3 a ubiquinol. It carries out the reaction protoporphyrinogen IX + 3 a quinone = protoporphyrin IX + 3 a quinol. The protein operates within porphyrin-containing compound metabolism; protoporphyrin-IX biosynthesis; protoporphyrin-IX from protoporphyrinogen-IX: step 1/1. Its function is as follows. Catalyzes the 6-electron oxidation of protoporphyrinogen IX to form protoporphyrin IX; under anaerobic conditions uses menaquinone as an electron acceptor, under aerobic condition uses ubiquinone as an electron acceptor. This is Protoporphyrinogen IX dehydrogenase [quinone] from Escherichia coli O157:H7.